A 64-amino-acid polypeptide reads, in one-letter code: Large ribosomal subunit protein bL35 (64 aa).

It belongs to the bacterial ribosomal protein bL35 family.

The chain is Large ribosomal subunit protein bL35 from Acinetobacter baylyi (strain ATCC 33305 / BD413 / ADP1).